A 137-amino-acid chain; its full sequence is Nucleoside diphosphate kinase (137 aa).

ATP-binding residues include lysine 9, phenylalanine 57, arginine 85, threonine 91, arginine 102, and asparagine 112. The active-site Pros-phosphohistidine intermediate is the histidine 115.

This sequence belongs to the NDK family. As to quaternary structure, homotetramer. Requires Mg(2+) as cofactor.

Its subcellular location is the cytoplasm. The enzyme catalyses a 2'-deoxyribonucleoside 5'-diphosphate + ATP = a 2'-deoxyribonucleoside 5'-triphosphate + ADP. It carries out the reaction a ribonucleoside 5'-diphosphate + ATP = a ribonucleoside 5'-triphosphate + ADP. Functionally, major role in the synthesis of nucleoside triphosphates other than ATP. The ATP gamma phosphate is transferred to the NDP beta phosphate via a ping-pong mechanism, using a phosphorylated active-site intermediate. The polypeptide is Nucleoside diphosphate kinase (Campylobacter jejuni subsp. jejuni serotype O:23/36 (strain 81-176)).